The following is an 887-amino-acid chain: Ubiquitin carboxyl-terminal hydrolase 4 (887 aa).

A Rhodanese domain is found at 202-328 (KEDSLLLIDV…WIKNGGEIDK (127 aa)). 2 disordered regions span residues 358–465 (AFPD…PKPP) and 484–505 (QKQN…TLIR). Residues 387–402 (TPPNGSSTLGRINSPV) are compositionally biased toward polar residues. One can recognise a USP domain in the interval 525-885 (VGLENMGNSC…SAYVLFYHRI (361 aa)). Residue C534 is the Nucleophile of the active site. H842 functions as the Proton acceptor in the catalytic mechanism.

Belongs to the peptidase C19 family.

Its subcellular location is the cytoplasm. The protein resides in the late endosome membrane. The enzyme catalyses Thiol-dependent hydrolysis of ester, thioester, amide, peptide and isopeptide bonds formed by the C-terminal Gly of ubiquitin (a 76-residue protein attached to proteins as an intracellular targeting signal).. RFU1 is an inhibitor of deubiquitination activity. Functionally, ubiquitin thioesterase that acts at the late endosome/prevacuolar compartment to recover ubiquitin from ubiquitinated membrane proteins en route to the vacuole. Also removes ubiquitin from soluble proteins targeted to proteasomes. Is essential to maintain a normal level of free ubiquitin. Required for promoting coordination of DNA replication and avoids DNA overreplication. The protein is Ubiquitin carboxyl-terminal hydrolase 4 (DOA4) of Candida glabrata (strain ATCC 2001 / BCRC 20586 / JCM 3761 / NBRC 0622 / NRRL Y-65 / CBS 138) (Yeast).